The chain runs to 929 residues: uncharacterized protein (929 aa).

A disordered region spans residues 1–257 (MARKGKVNTL…SVLSSDDNDS (257 aa)). Residues 23 to 34 (KQLENKILHSYE) are compositionally biased toward basic and acidic residues. 5 stretches are compositionally biased toward acidic residues: residues 35–50 (EESA…DNDE), 59–75 (SEDD…DEED), 107–117 (LNEEDDSDDSV), 133–144 (DENELVDLDTLL), and 188–220 (SESE…DGEN). S251, S555, and S557 each carry phosphoserine. Residues 602-729 (DEMQAFEDEL…KADKKNHKLK (128 aa)) form a disordered region. The span at 605–619 (QAFEDELAGVPNEDD) shows a compositional bias: acidic residues. Over residues 670-681 (NKPEMKEGQKKA) the composition is skewed to basic and acidic residues. The segment covering 696 to 711 (ETNPWLQVPDQRTSSA) has biased composition (polar residues). Residues 712-729 (KKLDKNSSKADKKNHKLK) are compositionally biased toward basic and acidic residues. A phosphoserine mark is found at S758, S760, and S764. Over residues 805–820 (KEDWVQEDAPKEEDHS) the composition is skewed to basic and acidic residues. A disordered region spans residues 805 to 843 (KEDWVQEDAPKEEDHSLPGWGSWGGVGVKQRKTKPKVKK). Positions 833–843 (KQRKTKPKVKK) are enriched in basic residues.

To yeast YML093w.

The protein resides in the nucleus. Its subcellular location is the nucleolus. This is an uncharacterized protein from Schizosaccharomyces pombe (strain 972 / ATCC 24843) (Fission yeast).